The chain runs to 359 residues: 3-dehydroquinate synthase (359 aa).

NAD(+) is bound by residues 71-76 (DGEAHK), 105-109 (GVIGD), 129-130 (TT), lysine 142, lysine 151, and 169-172 (TLHT). 3 residues coordinate Zn(2+): glutamate 184, histidine 247, and histidine 264.

This sequence belongs to the sugar phosphate cyclases superfamily. Dehydroquinate synthase family. Requires Co(2+) as cofactor. Zn(2+) serves as cofactor. The cofactor is NAD(+).

The protein resides in the cytoplasm. It catalyses the reaction 7-phospho-2-dehydro-3-deoxy-D-arabino-heptonate = 3-dehydroquinate + phosphate. Its pathway is metabolic intermediate biosynthesis; chorismate biosynthesis; chorismate from D-erythrose 4-phosphate and phosphoenolpyruvate: step 2/7. In terms of biological role, catalyzes the conversion of 3-deoxy-D-arabino-heptulosonate 7-phosphate (DAHP) to dehydroquinate (DHQ). This chain is 3-dehydroquinate synthase, found in Neisseria gonorrhoeae (strain ATCC 700825 / FA 1090).